The sequence spans 370 residues: MSGAPPAPRGGGHRWYGVARQLFFLVPAERIHTLVFALLRGVTAVGWPRRLLRRLLAPTDPVLASTVFGVRFPGPLGLAAGFDKDGLGLHAWGALGFGYAEIGTVTAGPQPGNPAPRLFRLPADRALLNRMGFNNLGAGALAVRLARRQPDIPIGVNIGKTKATPPDQAVDDYRASARLLGPLASYLVVNVSSPNTPGLRDLQAVGSLRPILSAVLAETSTPVLVKIAPDLSDSDVDDIADLAVELGLAGIVATNTTVSRDGLRTAGVDQLGAGGISGPPVARRAVEVLRRLYGRVGDRLVLISVGGIETADHAWERITAGASLLQGYTGFVYGGGLWAKQIHDGIAQRLRDGGFASLRDAVGSSARESG.

FMN-binding positions include 80–84 and threonine 104; that span reads AGFDK. A substrate-binding site is contributed by lysine 84. 129 to 133 lines the substrate pocket; that stretch reads NRMGF. Residues asparagine 157 and asparagine 190 each coordinate FMN. Position 190 (asparagine 190) interacts with substrate. Serine 193 (nucleophile) is an active-site residue. Asparagine 195 serves as a coordination point for substrate. Residues lysine 226 and threonine 254 each coordinate FMN. 255–256 provides a ligand contact to substrate; the sequence is NT. FMN contacts are provided by residues glycine 278, glycine 307, and 328-329; that span reads YT.

Belongs to the dihydroorotate dehydrogenase family. Type 2 subfamily. Monomer. Requires FMN as cofactor.

The protein resides in the cell membrane. It catalyses the reaction (S)-dihydroorotate + a quinone = orotate + a quinol. Its pathway is pyrimidine metabolism; UMP biosynthesis via de novo pathway; orotate from (S)-dihydroorotate (quinone route): step 1/1. Functionally, catalyzes the conversion of dihydroorotate to orotate with quinone as electron acceptor. This chain is Dihydroorotate dehydrogenase (quinone), found in Mycolicibacterium paratuberculosis (strain ATCC BAA-968 / K-10) (Mycobacterium paratuberculosis).